We begin with the raw amino-acid sequence, 351 residues long: Uroporphyrinogen decarboxylase (351 aa).

Substrate contacts are provided by residues Arg-25 to Arg-29, Asp-74, Tyr-151, Ser-206, and His-325.

Belongs to the uroporphyrinogen decarboxylase family. As to quaternary structure, homodimer.

It localises to the cytoplasm. It carries out the reaction uroporphyrinogen III + 4 H(+) = coproporphyrinogen III + 4 CO2. Its pathway is porphyrin-containing compound metabolism; protoporphyrin-IX biosynthesis; coproporphyrinogen-III from 5-aminolevulinate: step 4/4. Functionally, catalyzes the decarboxylation of four acetate groups of uroporphyrinogen-III to yield coproporphyrinogen-III. In Chlorobium limicola (strain DSM 245 / NBRC 103803 / 6330), this protein is Uroporphyrinogen decarboxylase.